A 412-amino-acid polypeptide reads, in one-letter code: Argininosuccinate synthase (412 aa).

Residues 10 to 18 (AYSGGLDTS) and alanine 36 each bind ATP. Tyrosine 87 and serine 92 together coordinate L-citrulline. At tyrosine 87 the chain carries Phosphotyrosine. Lysine 112 is subject to N6-acetyllysine. At tyrosine 113 the chain carries Phosphotyrosine. 115-123 (SHGATGKGN) lines the ATP pocket. Residues threonine 119, asparagine 123, and aspartate 124 each contribute to the L-aspartate site. Asparagine 123 serves as a coordination point for L-citrulline. Arginine 127 contributes to the L-citrulline binding site. N6-acetyllysine; by CLOCK occurs at positions 165 and 176. Serine 177 and serine 180 each carry phosphoserine. Positions 180 and 189 each coordinate L-citrulline. Threonine 219 carries the phosphothreonine modification. Positions 270 and 282 each coordinate L-citrulline.

The protein belongs to the argininosuccinate synthase family. Type 1 subfamily. In terms of assembly, homotetramer. Interacts with NMRAL1. Interacts with CLOCK; in a circadian manner. Forms tissue-specific complexes with ASL, SLC7A1, HSP90AA1 and nitric oxide synthase NOS1, NOS2 or NOS3; the complex regulates cell-autonomous L-arginine synthesis and citrulline recycling while channeling extracellular L-arginine to nitric oxide synthesis pathway. In terms of processing, acetylated by CLOCK in a circadian manner which negatively regulates its enzyme activity. Deacetylated by histone deacetylases.

It is found in the cytoplasm. It localises to the cytosol. The catalysed reaction is L-citrulline + L-aspartate + ATP = 2-(N(omega)-L-arginino)succinate + AMP + diphosphate + H(+). It functions in the pathway amino-acid biosynthesis; L-arginine biosynthesis; L-arginine from L-ornithine and carbamoyl phosphate: step 2/3. Its pathway is nitrogen metabolism; urea cycle; (N(omega)-L-arginino)succinate from L-aspartate and L-citrulline: step 1/1. Its function is as follows. One of the enzymes of the urea cycle, the metabolic pathway transforming neurotoxic amonia produced by protein catabolism into inocuous urea in the liver of ureotelic animals. Catalyzes the formation of arginosuccinate from aspartate, citrulline and ATP and together with ASL it is responsible for the biosynthesis of arginine in most body tissues. Indirectly, may be involved in the control of blood pressure. In Rattus norvegicus (Rat), this protein is Argininosuccinate synthase.